Consider the following 680-residue polypeptide: Dihydroxyacetone phosphate acyltransferase (680 aa).

2 positions are modified to phosphoserine: Ser12 and Ser17. Positions 162-167 (HRSYID) match the HXXXXD motif motif. Lys643 is modified (N6-acetyllysine). Residues 678-680 (AKL) carry the Microbody targeting signal motif.

This sequence belongs to the GPAT/DAPAT family. As to quaternary structure, part of a heterotrimeric complex composed of GNPAT, AGPS and a modified form of GNPAT.

The protein localises to the peroxisome membrane. It carries out the reaction dihydroxyacetone phosphate + an acyl-CoA = a 1-acylglycerone 3-phosphate + CoA. The catalysed reaction is dihydroxyacetone phosphate + hexadecanoyl-CoA = 1-hexadecanoylglycerone 3-phosphate + CoA. Its pathway is membrane lipid metabolism; glycerophospholipid metabolism. Its function is as follows. Dihydroxyacetonephosphate acyltransferase catalyzing the first step in the biosynthesis of plasmalogens, a subset of phospholipids that differ from other glycerolipids by having an alkyl chain attached through a vinyl ether linkage at the sn-1 position of the glycerol backbone, and which unique physical properties have an impact on various aspects of cell signaling and membrane biology. This Homo sapiens (Human) protein is Dihydroxyacetone phosphate acyltransferase.